A 153-amino-acid chain; its full sequence is Ribosome maturation factor RimP (153 aa).

Belongs to the RimP family.

Its subcellular location is the cytoplasm. In terms of biological role, required for maturation of 30S ribosomal subunits. This chain is Ribosome maturation factor RimP, found in Coxiella burnetii (strain Dugway 5J108-111).